The following is a 237-amino-acid chain: UPF0173 metal-dependent hydrolase BCAN_B0597 (237 aa).

This sequence belongs to the UPF0173 family.

The protein is UPF0173 metal-dependent hydrolase BCAN_B0597 of Brucella canis (strain ATCC 23365 / NCTC 10854 / RM-666).